The following is a 1097-amino-acid chain: Protease Do-like 7 (1097 aa).

The interval 55 to 243 (VLRTTACRAF…LPLQRVVRAL (189 aa)) is serine protease. Positions 269-366 (MTFLHKGFDE…RGGQPLSVSV (98 aa)) constitute a PDZ domain. His524 functions as the Charge relay system in the catalytic mechanism. Residues 546–556 (TSSGDGSQNDF) are compositionally biased toward polar residues. A disordered region spans residues 546–577 (TSSGDGSQNDFGSEAKKQRVDEDSSDGIAANG). Basic and acidic residues predominate over residues 558–567 (SEAKKQRVDE). Ser785 serves as the catalytic Charge relay system.

The protein belongs to the peptidase S1C family.

The protein localises to the cytoplasm. Probable serine protease. The polypeptide is Protease Do-like 7 (DEGP7) (Arabidopsis thaliana (Mouse-ear cress)).